A 176-amino-acid chain; its full sequence is ATP synthase subunit delta (176 aa).

This sequence belongs to the ATPase delta chain family. As to quaternary structure, F-type ATPases have 2 components, F(1) - the catalytic core - and F(0) - the membrane proton channel. F(1) has five subunits: alpha(3), beta(3), gamma(1), delta(1), epsilon(1). F(0) has three main subunits: a(1), b(2) and c(10-14). The alpha and beta chains form an alternating ring which encloses part of the gamma chain. F(1) is attached to F(0) by a central stalk formed by the gamma and epsilon chains, while a peripheral stalk is formed by the delta and b chains.

Its subcellular location is the cell inner membrane. Its function is as follows. F(1)F(0) ATP synthase produces ATP from ADP in the presence of a proton or sodium gradient. F-type ATPases consist of two structural domains, F(1) containing the extramembraneous catalytic core and F(0) containing the membrane proton channel, linked together by a central stalk and a peripheral stalk. During catalysis, ATP synthesis in the catalytic domain of F(1) is coupled via a rotary mechanism of the central stalk subunits to proton translocation. In terms of biological role, this protein is part of the stalk that links CF(0) to CF(1). It either transmits conformational changes from CF(0) to CF(1) or is implicated in proton conduction. The protein is ATP synthase subunit delta of Campylobacter fetus subsp. fetus (strain 82-40).